The chain runs to 238 residues: UPF0758 protein Ajs_3450 (238 aa).

The 123-residue stretch at 116–238 folds into the MPN domain; that stretch reads VFDSPQAVQH…ALSMAEQGLV (123 aa). Zn(2+)-binding residues include His187, His189, and Asp200. The short motif at 187-200 is the JAMM motif element; it reads HNHPSGSVQPSRAD.

Belongs to the UPF0758 family.

The chain is UPF0758 protein Ajs_3450 from Acidovorax sp. (strain JS42).